The following is a 791-amino-acid chain: von Willebrand factor A domain-containing protein 2 (791 aa).

A signal peptide spans 1–23 (MPPLLLLPAIYMLLFFRVSPTIS). One can recognise a VWFA 1 domain in the interval 51–221 (DILFLLDGSH…DATNGLLSTL (171 aa)). Asparagine 146 is a glycosylation site (N-linked (GlcNAc...) asparagine). Residues 295 to 332 (PGPCDSQPCQNGGTCIPEGVDRYHCLCPLAFGGEVNCA) form the EGF-like 1 domain. Disulfide bonds link cysteine 298–cysteine 309, cysteine 303–cysteine 319, and cysteine 321–cysteine 331. VWFA domains are found at residues 342-516 (DVLF…QRRL) and 530-704 (DLVF…IEWL). Residues 711-747 (PVNLCKPSPCMNEGTCVLKNGSYRCECRGGWEGPHCE) enclose the EGF-like 2 domain. 3 disulfide bridges follow: cysteine 715–cysteine 726, cysteine 720–cysteine 735, and cysteine 737–cysteine 746. The tract at residues 762-791 (HQEPAGLQGPTPSQQAPKHLRIGKALSSAK) is disordered.

Forms monomers and multimers. In terms of tissue distribution, detected in uterus, kidney, and skin. Also detected in intestine and lung of adult mice, and in calvaria, femur, brain, heart, intestine, skeletal muscle, and lung of newborn mice.

The protein localises to the secreted. This chain is von Willebrand factor A domain-containing protein 2 (Vwa2), found in Mus musculus (Mouse).